Reading from the N-terminus, the 269-residue chain is Centromere protein K (269 aa).

Over residues 1–10 (MNQEDLDPDS) the composition is skewed to acidic residues. The tract at residues 1 to 20 (MNQEDLDPDSTTDVGDVTNT) is disordered. Coiled coils occupy residues 22-42 (EELIRECEEMWKDMEECQNKL) and 98-151 (QKLR…NKVE).

Belongs to the CENP-K/MCM22 family. Component of the CENPA-CAD complex, composed of CENPI, CENPK, CENPL, CENPO, CENPP, CENPQ, CENPR and CENPS. The CENPA-CAD complex interacts with the CENPA-NAC complex, at least composed of CENPA, CENPC, CENPH, CENPM, CENPN, CENPT and CENPU. Interacts directly with CENPH. As to expression, detected in several fetal organs with highest levels in fetal liver. In adults, it is weakly expressed in lung and placenta.

The protein localises to the nucleus. Its subcellular location is the chromosome. The protein resides in the centromere. It localises to the kinetochore. Functionally, component of the CENPA-CAD (nucleosome distal) complex, a complex recruited to centromeres which is involved in assembly of kinetochore proteins, mitotic progression and chromosome segregation. May be involved in incorporation of newly synthesized CENPA into centromeres via its interaction with the CENPA-NAC complex. Acts in coordination with KNL1 to recruit the NDC80 complex to the outer kinetochore. The chain is Centromere protein K (CENPK) from Homo sapiens (Human).